A 166-amino-acid chain; its full sequence is Lipoprotein signal peptidase (166 aa).

The next 3 helical transmembrane spans lie at 12–32 (WLWLVVVVLIIDLGSKYLILQ), 70–90 (WFFAGIAIGICVILLVMMYRS), and 102–122 (ALIIGGALGNLFDRLWHGFVV). Residues D123 and D141 contribute to the active site. Residues 137–157 (FNLADSAICIGAALIVLEGFL) form a helical membrane-spanning segment.

This sequence belongs to the peptidase A8 family.

The protein resides in the cell inner membrane. It carries out the reaction Release of signal peptides from bacterial membrane prolipoproteins. Hydrolyzes -Xaa-Yaa-Zaa-|-(S,diacylglyceryl)Cys-, in which Xaa is hydrophobic (preferably Leu), and Yaa (Ala or Ser) and Zaa (Gly or Ala) have small, neutral side chains.. It functions in the pathway protein modification; lipoprotein biosynthesis (signal peptide cleavage). In terms of biological role, this protein specifically catalyzes the removal of signal peptides from prolipoproteins. The protein is Lipoprotein signal peptidase of Salmonella agona (strain SL483).